The chain runs to 444 residues: MKFLMQSISGRNRSLVRALVSRRYFASSPEEIAKRNYANDLSEYNTAVNSVTAQRRHYLLRDVYDDMKLDGVQPTADIFHSFVVGTMKGARLSDAFFFREEMKAMGIAPDVNLYNFLISTCGKCKNGKEAIRVYDEMKRYDVKPNGQTFVCLLNACAVSGQLDLVYAIVRDMTAAGVGLNQFCYAGLITAHLNKQPRPDNLSTKILEFVEQSKGWSAIDSSRKSAEDVMFSISEEELYNIPTADYSHRTRFLQRNLTVYHVAFSALADLKDVKATEALLEMLKKDGKDTDTYCMLQIMRCYLHSQDFENGLKLFQDYMSADKIPAMELYTTLIEGAMTGYTDNGMKIAQDTLIQMNERNFFLDPRTGSNLLLKAAGEKTGGYTVANMIWDLMLARNILPTLAAVEAYYKGLKEREIPEDDPRLMLVTRTYNNLRLREGTLPNRR.

A mitochondrion-targeting transit peptide spans 1–25 (MKFLMQSISGRNRSLVRALVSRRYF). PPR repeat units lie at residues 40-74 (DLSEYNTAVNSVTAQRRHYLLRDVYDDMKLDGVQP), 75-109 (TADIFHSFVVGTMKGARLSDAFFFREEMKAMGIAP), 110-144 (DVNLYNFLISTCGKCKNGKEAIRVYDEMKRYDVKP), 145-179 (NGQTFVCLLNACAVSGQLDLVYAIVRDMTAAGVGL), 255-289 (NLTVYHVAFSALADLKDVKATEALLEMLKKDGKDT), and 290-325 (DTYCMLQIMRCYLHSQDFENGLKLFQDYMSADKIPA).

It belongs to the PPR family. P subfamily.

It localises to the mitochondrion. The protein is Pentatricopeptide repeat-containing protein At4g35850, mitochondrial of Arabidopsis thaliana (Mouse-ear cress).